Here is a 143-residue protein sequence, read N- to C-terminus: Small ribosomal subunit protein bS18 (143 aa).

A disordered region spans residues 1–72; that stretch reads MARPDMGGPK…RGGEEGGRRG (72 aa). Gly residues predominate over residues 10-50; sequence KSSGGFGGPRSGGGFGGGGYGGGGGGGGGYGGGGGGGFGGR. The segment covering 51–70 has biased composition (basic and acidic residues); the sequence is GGDRGDRGDRDDRGGEEGGR.

It belongs to the bacterial ribosomal protein bS18 family. As to quaternary structure, part of the 30S ribosomal subunit. Forms a tight heterodimer with protein bS6.

Its function is as follows. Binds as a heterodimer with protein bS6 to the central domain of the 16S rRNA, where it helps stabilize the platform of the 30S subunit. The sequence is that of Small ribosomal subunit protein bS18 from Anaeromyxobacter sp. (strain Fw109-5).